We begin with the raw amino-acid sequence, 437 residues long: MEKELRSTILFNAYKKEIFTTNNGYKSMQKKLRSNWKIQSLKDEITSEKLNGVKLWITAGPREKFTAAEFEILKKYLDTGGDVFVMLGEGGESRFDTNINFLLEEYGIMVNNDAVVRNVYHKYFHPKEALVSSGVLNREISRAAGKAVPGIIDEESSGNNAQALTFVYPFGATLSVMKPAVAVLSTGSVCFPLNRPILAFYHSKNQGGKLAVLGSCHMFSDQYLDKEENSKIMDVVFQWLTTGDIHLNQIDAEDPEISDYMMLPYTATLSKRNRECLQESDEIPRDFTTLFDLSIFQLDTTSFHSVIEAHEQLNVKHEPLQLIQPQFETPLPTLQPAVFPPSFRELPPPPLELFDLDETFSSEKARLAQITNKCTEEDLEFYVRKCGDILGVTSKLPKDQQDAKHILEHVFFQVVEFKKLNQEHDIDTSETAFQNNF.

In terms of assembly, component of the IFT complex B, at least composed of IFT20, IFT22, IFT25, IFT27, IFT46, IFT52, TRAF3IP1/IFT54, IFT57, IFT74, IFT80, IFT81, and IFT88. Interacts with IFT88. Interacts with TTC25. Interacts with TTC21A. Interacts with IFT70A1, IFT70A2, IFT70B and KIF17. Interacts with USH1G.

The protein resides in the cell projection. It is found in the cilium. In terms of biological role, involved in ciliogenesis as part of a complex involved in intraflagellar transport (IFT), the bi-directional movement of particles required for the assembly, maintenance and functioning of primary cilia. Required for the anterograde transport of IFT88. The polypeptide is Intraflagellar transport protein 52 homolog (IFT52) (Homo sapiens (Human)).